A 301-amino-acid chain; its full sequence is Ornithine carbamoyltransferase (301 aa).

Carbamoyl phosphate-binding positions include Arg-100 and 127–130 (HPCQ). L-ornithine contacts are provided by residues Asn-158, Asp-221, and 225–226 (SM). 2 residues coordinate carbamoyl phosphate: Cys-260 and Arg-288.

It belongs to the aspartate/ornithine carbamoyltransferase superfamily. OTCase family. Homododecamer.

Its subcellular location is the cytoplasm. It carries out the reaction carbamoyl phosphate + L-ornithine = L-citrulline + phosphate + H(+). The protein operates within amino-acid biosynthesis; L-arginine biosynthesis; L-arginine from L-ornithine and carbamoyl phosphate: step 1/3. Reversibly catalyzes the transfer of the carbamoyl group from carbamoyl phosphate (CP) to the N(epsilon) atom of ornithine (ORN) to produce L-citrulline. The chain is Ornithine carbamoyltransferase (argF) from Moritella profunda.